A 203-amino-acid polypeptide reads, in one-letter code: Eukaryotic translation initiation factor isoform 4E (203 aa).

Low complexity predominate over residues 1 to 25; the sequence is MATETAGAVVESSSAATVPSPAPEA. The disordered stretch occupies residues 1 to 27; that stretch reads MATETAGAVVESSSAATVPSPAPEAGS. MRNA contacts are provided by residues 47–52, Lys79, and 97–98; these read QGAAWG and WE. Cys102 and Cys141 form a disulfide bridge. 148 to 153 lines the mRNA pocket; sequence RQRQDK.

Belongs to the eukaryotic initiation factor 4E family. In terms of assembly, EIF4F is a multi-subunit complex, the composition of which varies with external and internal environmental conditions. It is composed of at least EIF4A, EIF4E and EIF4G. EIF4E is also known to interact with other partners. In higher plants two isoforms of EIF4F have been identified, named isoform EIF4F and isoform EIF(iso)4F. Isoform EIF4F has subunits p220 and p26, whereas isoform EIF(iso)4F has subunits p82 and p28. (Microbial infection) Interacts with the potyvirus peanut stripe virus (PStV) helper component proteinase (HC-Pro) in the cytoplasm and with PStV viral genome-linked protein (VPg) in the nucleus; these interactions are possible in susceptible hosts but impaired in resistant plants. In terms of processing, according to the redox status, the Cys-102-Cys-141 disulfide bridge may have a role in regulating protein function by affecting its ability to bind capped mRNA. Expressed ubiquitously with highest levels in young leaves and roots, and lowest levels in flowers.

Its subcellular location is the cytoplasm. The protein localises to the nucleus. Component of the protein complex eIF4F, which is involved in the recognition of the mRNA cap, ATP-dependent unwinding of 5'-terminal secondary structure and recruitment of mRNA to the ribosome. Recognizes and binds the 7-methylguanosine-containing mRNA cap during an early step in the initiation of protein synthesis and facilitates ribosome binding by inducing the unwinding of the mRNAs secondary structures. Key component of recessive resistance to potyviruses such as peanut stripe virus (PStV). Its function is as follows. (Microbial infection) Susceptibility host factor required for viral infection by recruiting viral RNAs to the host ribosomal complex via an interaction with viral genome-linked protein (VPg). This chain is Eukaryotic translation initiation factor isoform 4E, found in Arachis hypogaea (Peanut).